We begin with the raw amino-acid sequence, 116 residues long: Iron-sulfur cluster insertion protein ErpA (116 aa).

Iron-sulfur cluster contacts are provided by Cys44, Cys108, and Cys110.

The protein belongs to the HesB/IscA family. Homodimer. Iron-sulfur cluster is required as a cofactor.

Functionally, required for insertion of 4Fe-4S clusters for at least IspG. The protein is Iron-sulfur cluster insertion protein ErpA of Stutzerimonas stutzeri (strain A1501) (Pseudomonas stutzeri).